We begin with the raw amino-acid sequence, 382 residues long: uncharacterized protein (382 aa).

12 helical membrane passes run 14–34 (GLLL…LWLA), 45–65 (VVSS…GYVI), 79–99 (FIFA…SWLA), 102–122 (FVAG…LMCS), 131–151 (LLAA…LLVS), 157–177 (LMSV…PLLF), 204–224 (LGVN…GLMP), 235–255 (ASIG…QWPI), 270–290 (VQVF…AMAP), 291–311 (ALFI…AWAC), 325–345 (ALLL…AMLM), and 348–368 (FSDN…LLML).

This sequence belongs to the major facilitator superfamily. YcaD (TC 2.A.1.26) family.

The protein localises to the cell inner membrane. This is an uncharacterized protein from Shigella flexneri serotype 5b (strain 8401).